A 132-amino-acid chain; its full sequence is Small ribosomal subunit protein uS8 (132 aa).

Belongs to the universal ribosomal protein uS8 family. Part of the 30S ribosomal subunit. Contacts proteins S5 and S12.

One of the primary rRNA binding proteins, it binds directly to 16S rRNA central domain where it helps coordinate assembly of the platform of the 30S subunit. The chain is Small ribosomal subunit protein uS8 from Afipia carboxidovorans (strain ATCC 49405 / DSM 1227 / KCTC 32145 / OM5) (Oligotropha carboxidovorans).